Consider the following 54-residue polypeptide: UPF0391 membrane protein Pmen_0080 (54 aa).

Transmembrane regions (helical) follow at residues 4–24 and 28–48; these read WALT…GGIA and AGIA…SFIM.

Belongs to the UPF0391 family.

It is found in the cell membrane. The polypeptide is UPF0391 membrane protein Pmen_0080 (Ectopseudomonas mendocina (strain ymp) (Pseudomonas mendocina)).